The primary structure comprises 634 residues: Factor of DNA methylation 1 (634 aa).

A coiled-coil region spans residues 288-469; sequence LDEKKNLHQA…LESMNSVLMT (182 aa). Residues 349-364 show a composition bias toward basic and acidic residues; it reads ELDRQKLDEDKRKSDA. Positions 349 to 375 are disordered; it reads ELDRQKLDEDKRKSDAMNKSLQLASRE.

Homodimer. Interacts with IDN2 and AGO4. Forms a complex with IDN2 and FMD2/INDL2. As to expression, highly expressed in flowers and at lower levels in roots, leaves and stems.

Its function is as follows. Forms a complex with IDN2 and FDM2/IDNL2 that is required for RNA-directed DNA methylation (RdDM) and that functions at a downstream step of the RdDM pathway. Required for de novo DNA methylation and 24 nucleotide small interfering RNA (siRNA) accumulation. Binds unmethylated but not methylated DNAs through its coiled-coil domain. May bind double-stranded RNAs (dsRNAs) with 5'-overhangs through its XS domain. However, according to, FMD1 does not bind dsRNAs. The sequence is that of Factor of DNA methylation 1 from Arabidopsis thaliana (Mouse-ear cress).